The chain runs to 555 residues: MNARADRAGDTVHRVPVLVVGGSLVGLSTSVFLGRLGVRHMLVERHAGTSVHPRGRGNNVRTMEVYRAAGVEQGIRRAAATLAGNHGILQTPSLVGDEGEWLLRDIDPGGGLARFSPSSWCLCSQNDLEPVLLDHAVELGGEIRFSTELQSFEQDPAGVTAVIKSRRSGEHTTVRADYLVAADGPRSPVREQLGIGQSGPGDLFHNVSVTFRSRRLAEFVGDRHFIVCYLTNPEADGALLPVDNRENWVFHAPWYPRAARPLEDFTDERCADHIRRAVGVPDLDVEITGKAPWHAAQRVARQYRAGRVFLAGDSAHEMSPTGAFGSNTGIQDAHNLAWKLAAVLGGWAGDGLLDTYDAERRPVAEATTARAAARSAEHSHPGFAPPPGTSGGPQGGILNVALGYRYPGGAVLGADPATPVVPEALTLAGEPGSRAPHLWMSRRGERLSTLDLYERSPVLLSDADAGAPDAWHESAVRLAEELSVPLTSYRVGRSAGADLTPEDDVNWTARHGTPPGGAVLVRPDGFVAWRSQEPVPAEETEPTLRHVLTTVLSLG.

FAD contacts are provided by residues 16–45 (PVLV…LVER) and 303–313 (YRAGRVFLAGD). Residues 366-395 (ATTARAAARSAEHSHPGFAPPPGTSGGPQG) form a disordered region.

Belongs to the PheA/TfdB FAD monooxygenase family. FAD serves as cofactor.

Involved in developmentally regulated synthesis of a compound biosynthetically related to polyketide antibiotics which is essential for spore color in Streptomyces halstedii. The chain is Putative polyketide hydroxylase (schC) from Streptomyces halstedii.